A 445-amino-acid chain; its full sequence is Questin oxidase (445 aa).

Belongs to the questin oxidase family. NADPH serves as cofactor. Specifically expressed in conidia.

The protein operates within secondary metabolite biosynthesis. Functionally, questin oxidase; part of the gene cluster that mediates the biosynthesis of trypacidin, a mycotoxin with antiprotozoal activity and that plays a role in the infection process. The pathway begins with the synthesis of atrochrysone thioester by the polyketide synthase (PKS) tpcC. The atrochrysone carboxyl ACP thioesterase tpcB then breaks the thioester bond and releases the atrochrysone carboxylic acid from tpcC. The decarboxylase tpcK converts atrochrysone carboxylic acid to atrochrysone which is further reduced into emodin anthrone. The next step is performed by the emodin anthrone oxygenase tpcL that catalyzes the oxidation of emodinanthrone to emodin. Emodin O-methyltransferase encoded by tpcA catalyzes methylation of the 8-hydroxy group of emodin to form questin. Ring cleavage of questin by questin oxidase tpcI leads to desmethylsulochrin via several intermediates including questin epoxide. Another methylation step catalyzed by tpcM leads to the formation of sulochrin which is further converted to monomethylsulfochrin by tpcH. Finally, the tpcJ catalyzes the conversion of monomethylsulfochrin to trypacidin. Trypacidin is toxic for human pulmonary and bronchial epithelial cells by initiating the intracellular formation of nitric oxide (NO) and hydrogen peroxide (H(2)O(2)), thus triggering host necrotic cell death. The trypacidin pathway is also able to produce endocrocin via a distinct route from the endocrocin Enc pathway. This is Questin oxidase from Aspergillus fumigatus (strain ATCC MYA-4609 / CBS 101355 / FGSC A1100 / Af293) (Neosartorya fumigata).